Consider the following 230-residue polypeptide: 2,3-bisphosphoglycerate-dependent phosphoglycerate mutase (230 aa).

Substrate is bound by residues 8–15, 21–22, Arg-60, 87–90, Lys-98, 114–115, and 183–184; these read RHGESEWN, TG, ERHY, RR, and GN. His-9 serves as the catalytic Tele-phosphohistidine intermediate. Catalysis depends on Glu-87, which acts as the Proton donor/acceptor.

It belongs to the phosphoglycerate mutase family. BPG-dependent PGAM subfamily.

It carries out the reaction (2R)-2-phosphoglycerate = (2R)-3-phosphoglycerate. The protein operates within carbohydrate degradation; glycolysis; pyruvate from D-glyceraldehyde 3-phosphate: step 3/5. Functionally, catalyzes the interconversion of 2-phosphoglycerate and 3-phosphoglycerate. In Streptococcus thermophilus (strain CNRZ 1066), this protein is 2,3-bisphosphoglycerate-dependent phosphoglycerate mutase.